Here is a 143-residue protein sequence, read N- to C-terminus: MFFGTFTPKLDDKGRLTLPAKFREELGEGLMVVKGQDRSLAVYPKAEFLVRAKKAAEASRTNPKARAFVRNLAASADEQNLDSQGRISVSVMHRDYAGLTKECVVIGNVDFIEIWDAESWADYSAEHEEDFSDGDDEVLATFL.

SpoVT-AbrB domains follow at residues 5 to 47 (TFTP…PKAE) and 76 to 119 (ADEQ…DAES).

Belongs to the MraZ family. As to quaternary structure, forms oligomers.

It is found in the cytoplasm. It localises to the nucleoid. The sequence is that of Transcriptional regulator MraZ from Corynebacterium jeikeium (strain K411).